Consider the following 218-residue polypeptide: Nuclear cap-binding protein subunit 2 (218 aa).

Residues tyrosine 24, tyrosine 49, 118-122 (TIDLD), 129-133 (RQFGR), and 139-140 (QV) contribute to the mRNA site. Residues 46 to 124 (ATIYVGNLSF…REITIDLDPG (79 aa)) enclose the RRM domain. Positions 176 to 194 (DPHKNHHHHHHGHHHHHGQ) are enriched in basic residues. The interval 176 to 200 (DPHKNHHHHHHGHHHHHGQPHAAAA) is disordered.

It belongs to the RRM NCBP2 family. Component of the nuclear cap-binding complex (CBC).

The protein localises to the nucleus. Its function is as follows. Component of the cap-binding complex (CBC) involved in the nuclear export of capped U snRNAs. The CBC complex is required for efficient pre-mRNA splicing through efficient commitment complex and spliceosome formation; and involved in rRNA processing at sites A0, A1 and A2. This is Nuclear cap-binding protein subunit 2 (CBC2) from Eremothecium gossypii (strain ATCC 10895 / CBS 109.51 / FGSC 9923 / NRRL Y-1056) (Yeast).